The primary structure comprises 884 residues: DNA mismatch repair protein MutS (884 aa).

Residue 643-650 (GPNMGGKS) participates in ATP binding.

The protein belongs to the DNA mismatch repair MutS family.

Its function is as follows. This protein is involved in the repair of mismatches in DNA. It is possible that it carries out the mismatch recognition step. This protein has a weak ATPase activity. This Methylobacillus flagellatus (strain ATCC 51484 / DSM 6875 / VKM B-1610 / KT) protein is DNA mismatch repair protein MutS.